Here is an 89-residue protein sequence, read N- to C-terminus: MALTVEQKAQIVKDFQRKEGDTGSSEVQVALLTFRINDLTPHFKANPKDHHSRRGLLKMVSQRRRLLAYLRRTQPDTYRALITRLGLRK.

This sequence belongs to the universal ribosomal protein uS15 family. In terms of assembly, part of the 30S ribosomal subunit. Forms a bridge to the 50S subunit in the 70S ribosome, contacting the 23S rRNA.

Its function is as follows. One of the primary rRNA binding proteins, it binds directly to 16S rRNA where it helps nucleate assembly of the platform of the 30S subunit by binding and bridging several RNA helices of the 16S rRNA. In terms of biological role, forms an intersubunit bridge (bridge B4) with the 23S rRNA of the 50S subunit in the ribosome. The chain is Small ribosomal subunit protein uS15 from Neisseria gonorrhoeae (strain ATCC 700825 / FA 1090).